The chain runs to 85 residues: Kunitz-type serine protease inhibitor homolog beta-bungarotoxin B1 chain, major component (85 aa).

The first 24 residues, 1–24 (MSSGGLLLLLGLLTLCAELIPVSS), serve as a signal peptide directing secretion. The region spanning 31-81 (CDKPPDKGNCGPVRRAFYYDTRLKTCKAFQYRGCNGNGNHFKTETLCRCEC) is the BPTI/Kunitz inhibitor domain. Intrachain disulfides connect Cys31/Cys81, Cys40/Cys64, and Cys56/Cys77.

The protein belongs to the venom Kunitz-type family. As to quaternary structure, heterodimer; disulfide-linked. The A chains have phospholipase A2 activity and the B chains show homology with the basic protease inhibitors. In terms of tissue distribution, expressed by the venom gland.

Its subcellular location is the secreted. Beta-1-bungarotoxin is a presynaptic neurotoxin of the venom. The B chain is homologous to venom basic protease inhibitors but has no protease inhibitor activity and blocks voltage-gated potassium channels (Kv). This is Kunitz-type serine protease inhibitor homolog beta-bungarotoxin B1 chain, major component from Bungarus multicinctus (Many-banded krait).